The following is a 94-amino-acid chain: Aspartyl/glutamyl-tRNA(Asn/Gln) amidotransferase subunit C (94 aa).

This sequence belongs to the GatC family. Heterotrimer of A, B and C subunits.

It carries out the reaction L-glutamyl-tRNA(Gln) + L-glutamine + ATP + H2O = L-glutaminyl-tRNA(Gln) + L-glutamate + ADP + phosphate + H(+). The catalysed reaction is L-aspartyl-tRNA(Asn) + L-glutamine + ATP + H2O = L-asparaginyl-tRNA(Asn) + L-glutamate + ADP + phosphate + 2 H(+). In terms of biological role, allows the formation of correctly charged Asn-tRNA(Asn) or Gln-tRNA(Gln) through the transamidation of misacylated Asp-tRNA(Asn) or Glu-tRNA(Gln) in organisms which lack either or both of asparaginyl-tRNA or glutaminyl-tRNA synthetases. The reaction takes place in the presence of glutamine and ATP through an activated phospho-Asp-tRNA(Asn) or phospho-Glu-tRNA(Gln). The polypeptide is Aspartyl/glutamyl-tRNA(Asn/Gln) amidotransferase subunit C (Opitutus terrae (strain DSM 11246 / JCM 15787 / PB90-1)).